We begin with the raw amino-acid sequence, 115 residues long: MSNIIKQIEQEQMKQDVPAFRPGDSVEVKVWVVEGSKKRLQAFEGVVIAIRNRGLHSAFTVRKISNGEGVERVFQTHSPVIDSITVKRRGAVRQAKLYYLRERTGKSARIKERLG.

It belongs to the bacterial ribosomal protein bL19 family.

Its function is as follows. This protein is located at the 30S-50S ribosomal subunit interface and may play a role in the structure and function of the aminoacyl-tRNA binding site. The chain is Large ribosomal subunit protein bL19 from Yersinia pseudotuberculosis serotype O:1b (strain IP 31758).